A 248-amino-acid chain; its full sequence is Molybdate/tungstate transport system permease protein WtpB (248 aa).

Residues 1–9 lie on the Cytoplasmic side of the membrane; that stretch reads MGGRDYTLY. The chain crosses the membrane as a helical span at residues 10-30; it reads LFAALGSFLIVYIALPIIVIF. The Extracellular segment spans residues 31–56; that stretch reads TKQALDFRMLVKTIHDPLVIEALRNS. The region spanning 53–239 is the ABC transmembrane type-1 domain; the sequence is LRNSLLTATA…GISLGIFVVL (187 aa). The helical transmembrane segment at 57-77 threads the bilayer; it reads LLTATATALISLLFGVPLGYV. Topologically, residues 78–91 are cytoplasmic; it reads LARKDFRGKSLVQA. A helical transmembrane segment spans residues 92 to 112; the sequence is IIDVPIVIPHSVVGIMLLVTF. Topologically, residues 113–115 are extracellular; it reads SNA. The helical transmembrane segment at 116 to 136 threads the bilayer; that stretch reads ILDSYKGIIAAMLFVSAPFAI. Topologically, residues 137–164 are cytoplasmic; the sequence is NSARDGFLAVDEKLEHVARTLGASKLRT. A helical membrane pass occupies residues 165-185; that stretch reads FFSISLPIALPSIASGAIMAW. At 186–223 the chain is on the extracellular side; that stretch reads ARGISEVGAILIVAYYPKTAQVLVMEYFNNYGLRASRP. The helical transmembrane segment at 224 to 244 threads the bilayer; sequence ISVILMGISLGIFVVLRWLIG. The Cytoplasmic portion of the chain corresponds to 245–248; sequence KAKS.

This sequence belongs to the binding-protein-dependent transport system permease family. The complex is composed of two ATP-binding proteins (WtpC), two transmembrane proteins (WtpB) and a solute-binding protein (WtpA).

It is found in the cell membrane. Part of the ABC transporter complex WtpABC involved in molybdate/tungstate import. Probably responsible for the translocation of the substrate across the membrane. This is Molybdate/tungstate transport system permease protein WtpB (wtpB) from Pyrococcus abyssi (strain GE5 / Orsay).